Reading from the N-terminus, the 453-residue chain is Glutamate--tRNA ligase 2 (453 aa).

A 'HIGH' region motif is present at residues 10–20 (PSPTGFLHIGG). Positions 232 to 236 (KLSKR) match the 'KMSKS' region motif. Lys235 contributes to the ATP binding site.

It belongs to the class-I aminoacyl-tRNA synthetase family. Glutamate--tRNA ligase type 1 subfamily. In terms of assembly, monomer.

It is found in the cytoplasm. It catalyses the reaction tRNA(Glu) + L-glutamate + ATP = L-glutamyl-tRNA(Glu) + AMP + diphosphate. In terms of biological role, catalyzes the attachment of glutamate to tRNA(Glu) in a two-step reaction: glutamate is first activated by ATP to form Glu-AMP and then transferred to the acceptor end of tRNA(Glu). The sequence is that of Glutamate--tRNA ligase 2 from Wolbachia sp. subsp. Brugia malayi (strain TRS).